We begin with the raw amino-acid sequence, 264 residues long: 3-methyl-2-oxobutanoate hydroxymethyltransferase (264 aa).

2 residues coordinate Mg(2+): D45 and D84. Residues 45–46 (DS), D84, and K112 contribute to the 3-methyl-2-oxobutanoate site. E114 is a Mg(2+) binding site. E181 acts as the Proton acceptor in catalysis.

The protein belongs to the PanB family. In terms of assembly, homodecamer; pentamer of dimers. Requires Mg(2+) as cofactor.

It is found in the cytoplasm. The catalysed reaction is 3-methyl-2-oxobutanoate + (6R)-5,10-methylene-5,6,7,8-tetrahydrofolate + H2O = 2-dehydropantoate + (6S)-5,6,7,8-tetrahydrofolate. Its pathway is cofactor biosynthesis; (R)-pantothenate biosynthesis; (R)-pantoate from 3-methyl-2-oxobutanoate: step 1/2. Catalyzes the reversible reaction in which hydroxymethyl group from 5,10-methylenetetrahydrofolate is transferred onto alpha-ketoisovalerate to form ketopantoate. In Escherichia coli O17:K52:H18 (strain UMN026 / ExPEC), this protein is 3-methyl-2-oxobutanoate hydroxymethyltransferase.